Consider the following 271-residue polypeptide: Neurexophilin-1 (271 aa).

The first 21 residues, 1–21, serve as a signal peptide directing secretion; it reads MQAACWYVLLLLQPTIYLVTC. The interval 22–97 is II; that stretch reads ANLTNGGKSE…WDWLRNSTDL (76 aa). Residues Asn23, Asn68, Asn93, Asn146, Asn156, and Asn162 are each glycosylated (N-linked (GlcNAc...) asparagine). Residues 98–176 are III; the sequence is QEPRPRAKRR…LVPPTKIVEF (79 aa). The interval 177–185 is IV (linker domain); it reads DLAQQTVID. The segment at 186–271 is v (Cys-rich); the sequence is AKDSKSFNCR…HSDTPYFPSG (86 aa).

The protein belongs to the neurexophilin family.

Its subcellular location is the secreted. In terms of biological role, may be signaling molecules that resemble neuropeptides and that act by binding to alpha-neurexins and possibly other receptors. The chain is Neurexophilin-1 (NXPH1) from Pongo abelii (Sumatran orangutan).